Consider the following 126-residue polypeptide: Probable V-type proton ATPase subunit G (126 aa).

Residues 23-45 (NEARKRKLQRTKQAKQEAQAEVE) are disordered. Positions 26-35 (RKRKLQRTKQ) are enriched in basic residues.

This sequence belongs to the V-ATPase G subunit family. As to quaternary structure, V-ATPase is a heteromultimeric enzyme made up of two complexes: the ATP-hydrolytic V1 complex and the proton translocation V0 complex. The V1 complex consists of three catalytic AB heterodimers that form a heterohexamer, three peripheral stalks each consisting of EG heterodimers, one central rotor including subunits D and F, and the regulatory subunits C and H. The proton translocation complex V0 consists of the proton transport subunit a, a ring of proteolipid subunits c9c'', rotary subunit d, subunits e and f, and the accessory subunits vah-19/Ac45 and vah-20/PRR.

Functionally, subunit of the V1 complex of vacuolar(H+)-ATPase (V-ATPase), a multisubunit enzyme composed of a peripheral complex (V1) that hydrolyzes ATP and a membrane integral complex (V0) that translocates protons. V-ATPase is responsible for acidifying and maintaining the pH of intracellular compartments and in some cell types, is targeted to the plasma membrane, where it is responsible for acidifying the extracellular environment. In neurons, required for necrotic cell death by promoting intracellular acidification. The polypeptide is Probable V-type proton ATPase subunit G (Caenorhabditis briggsae).